The primary structure comprises 455 residues: Regulatory protein LuxO (455 aa).

The Response regulatory domain occupies 1 to 112 (MVEDTASVAA…RLRVTVNNAI (112 aa)). D47 carries the post-translational modification 4-aspartylphosphate. Positions 132-361 (FIGSSQTMQA…LQNVLRNVVV (230 aa)) constitute a Sigma-54 factor interaction domain. ATP-binding positions include 160–167 (GESGTGKE) and 223–232 (ADGGTLFLDE).

Functionally, involved in the regulation of different processes depending on the cell density. Acts together with sigma-54 to repress, perhaps indirectly, some genes. In Vibrio cholerae serotype O1 (strain ATCC 39315 / El Tor Inaba N16961), this protein is Regulatory protein LuxO (luxO).